The following is a 123-amino-acid chain: Polyadenylate-binding protein-interacting protein 2B (123 aa).

Methionine 1 carries the post-translational modification N-acetylmethionine. The span at 1–13 (MNGSNMANTSPSV) shows a compositional bias: polar residues. 2 disordered regions span residues 1 to 30 (MNGSNMANTSPSVKSKEDQGLSGHDEKENP) and 91 to 123 (NGLSVSEGHDSEDILSKSNLNPDAKEFIPGEKY). 2 stretches are compositionally biased toward basic and acidic residues: residues 14–30 (KSKEDQGLSGHDEKENP) and 113–123 (DAKEFIPGEKY).

Belongs to the PAIP2 family. As to quaternary structure, interacts (via central acidic portion and C-terminus) with PABPC1 (via the second and third RRM domains and the C-terminus). Post-translationally, ubiquitinated in vitro. As to expression, expressed in brain, cervix, heart, liver, ovary, kidney, prostate and testis.

Its function is as follows. Inhibits translation of capped and polyadenylated mRNAs by displacing PABPC1 from the poly(A) tail. The chain is Polyadenylate-binding protein-interacting protein 2B (PAIP2B) from Homo sapiens (Human).